Here is a 372-residue protein sequence, read N- to C-terminus: UDP-N-acetylglucosamine--N-acetylmuramyl-(pentapeptide) pyrophosphoryl-undecaprenol N-acetylglucosamine transferase (372 aa).

UDP-N-acetyl-alpha-D-glucosamine is bound by residues 11 to 13, N123, R160, S200, and Q298; that span reads TAG.

Belongs to the glycosyltransferase 28 family. MurG subfamily.

Its subcellular location is the cell membrane. It carries out the reaction di-trans,octa-cis-undecaprenyl diphospho-N-acetyl-alpha-D-muramoyl-L-alanyl-D-glutamyl-meso-2,6-diaminopimeloyl-D-alanyl-D-alanine + UDP-N-acetyl-alpha-D-glucosamine = di-trans,octa-cis-undecaprenyl diphospho-[N-acetyl-alpha-D-glucosaminyl-(1-&gt;4)]-N-acetyl-alpha-D-muramoyl-L-alanyl-D-glutamyl-meso-2,6-diaminopimeloyl-D-alanyl-D-alanine + UDP + H(+). Its pathway is cell wall biogenesis; peptidoglycan biosynthesis. Cell wall formation. Catalyzes the transfer of a GlcNAc subunit on undecaprenyl-pyrophosphoryl-MurNAc-pentapeptide (lipid intermediate I) to form undecaprenyl-pyrophosphoryl-MurNAc-(pentapeptide)GlcNAc (lipid intermediate II). The sequence is that of UDP-N-acetylglucosamine--N-acetylmuramyl-(pentapeptide) pyrophosphoryl-undecaprenol N-acetylglucosamine transferase from Cutibacterium acnes (strain DSM 16379 / KPA171202) (Propionibacterium acnes).